Reading from the N-terminus, the 301-residue chain is Probable alpha-L-glutamate ligase (301 aa).

Positions 104–287 (LQLLSRKGIG…VAGLIYEFIE (184 aa)) constitute an ATP-grasp domain. ATP is bound by residues Lys141, 178–179 (EF), Asp187, and 211–213 (RSN). Residues Asp248, Glu260, and Asn262 each contribute to the Mg(2+) site. Mn(2+) is bound by residues Asp248, Glu260, and Asn262.

Belongs to the RimK family. Mg(2+) is required as a cofactor. Requires Mn(2+) as cofactor.

This is Probable alpha-L-glutamate ligase from Shewanella loihica (strain ATCC BAA-1088 / PV-4).